We begin with the raw amino-acid sequence, 619 residues long: Probable ATP-dependent RNA helicase DDX59 (619 aa).

The tract at residues 1-101 (MFVPRSLKIK…KSFSKTQRWP (101 aa)) is disordered. Over residues 12–27 (SSNDDLKSGEAKKSKP) the composition is skewed to basic and acidic residues. Lysine 26 participates in a covalent cross-link: Glycyl lysine isopeptide (Lys-Gly) (interchain with G-Cter in SUMO2). A compositionally biased stretch (polar residues) spans 59 to 76 (ASSTNSPSCQLAEVSSTG). Serine 64 is modified (phosphoserine). Positions 79 to 91 (EGVKDSHPSEEPV) are enriched in basic and acidic residues. Residues 104–133 (GEPVCVVCGRYGEYICDKTDEDVCSLECKA) form an HIT-type zinc finger. A Phosphoserine modification is found at serine 160. A Q motif motif is present at residues 203–231 (IDFEHCGFPETLNQNLKKSGYEVPTPIQM). The Helicase ATP-binding domain occupies 234 to 405 (IPVGLLGRDI…DQLLHNPVRI (172 aa)). 247–254 (ADTGSGKT) lines the ATP pocket. Positions 353–356 (DEAD) match the DEAD box motif. Residues 416 to 579 (SVRQIILWVE…ILPPQLLNSP (164 aa)) enclose the Helicase C-terminal domain. The span at 583–594 (EQKRKEQQKDRQ) shows a compositional bias: basic and acidic residues. A disordered region spans residues 583 to 603 (EQKRKEQQKDRQTQNSLVTGA).

It belongs to the DEAD box helicase family. DDX59 subfamily. In terms of assembly, interacts (via HIT-type zinc finger) with the RUVBL1/RUVBL2 complex in the presence of ADP.

The protein localises to the cytoplasm. Its subcellular location is the nucleus. The catalysed reaction is ATP + H2O = ADP + phosphate + H(+). In Mus musculus (Mouse), this protein is Probable ATP-dependent RNA helicase DDX59 (Ddx59).